The primary structure comprises 224 residues: Deoxyribose-phosphate aldolase (224 aa).

Residue D94 is the Proton donor/acceptor of the active site. Residue K158 is the Schiff-base intermediate with acetaldehyde of the active site. K187 acts as the Proton donor/acceptor in catalysis.

Belongs to the DeoC/FbaB aldolase family. DeoC type 1 subfamily. Homodimer.

The protein resides in the cytoplasm. It catalyses the reaction 2-deoxy-D-ribose 5-phosphate = D-glyceraldehyde 3-phosphate + acetaldehyde. With respect to regulation, activated by citrate. Inhibited by NaBH(4). Activity is independent of divalent metal cations. Functionally, catalyzes a reversible aldol reaction between acetaldehyde and D-glyceraldehyde 3-phosphate to generate 2-deoxy-D-ribose 5-phosphate. Could be involved in pentose biosynthesis. The chain is Deoxyribose-phosphate aldolase from Thermococcus kodakarensis (strain ATCC BAA-918 / JCM 12380 / KOD1) (Pyrococcus kodakaraensis (strain KOD1)).